A 142-amino-acid polypeptide reads, in one-letter code: Putative 2'-deoxynucleoside 5'-phosphate N-hydrolase 1 (142 aa).

Residues F4–R10, Y19, H36, E82, and S106–M108 each bind substrate.

It belongs to the 2'-deoxynucleoside 5'-phosphate N-hydrolase 1 family. As to quaternary structure, monomer and homodimer.

It catalyses the reaction a pyrimidine 2'-deoxyribonucleoside 5'-phosphate + H2O = a pyrimidine nucleobase + 2-deoxy-D-ribose 5-phosphate. It carries out the reaction a purine 2'-deoxyribonucleoside 5'-phosphate + H2O = a purine nucleobase + 2-deoxy-D-ribose 5-phosphate. Its function is as follows. Catalyzes the cleavage of the N-glycosidic bond of deoxyribonucleoside 5'-monophosphates to yield deoxyribose 5-phosphate and a purine or pyrimidine base. The polypeptide is Putative 2'-deoxynucleoside 5'-phosphate N-hydrolase 1 (Syntrophotalea carbinolica (strain DSM 2380 / NBRC 103641 / GraBd1) (Pelobacter carbinolicus)).